Here is a 430-residue protein sequence, read N- to C-terminus: Ethylene-responsive transcription factor WRI1 (430 aa).

Low complexity predominate over residues 1 to 26 (MKKRLTTSTCSSSPSSSVSSSTTTSS). Positions 1-66 (MKKRLTTSTC…PASTRRSSIY (66 aa)) are disordered. Polar residues predominate over residues 53–63 (NPTSPASTRRS). Residues 65–131 (IYRGVTRHRW…WGPDTILNFP (67 aa)) constitute a DNA-binding region (AP2/ERF 1). Thr-70 bears the Phosphothreonine; by KIN10 mark. Ser-166 is subject to Phosphoserine; by KIN10. The AP2/ERF 2 DNA-binding region spans 167–225 (KYRGVARHHHNGRWEARIGRVFGNKYLYLGTYNTQEEAAAAYDMAAIEYRGANAVTNFD). The segment covering 260 to 274 (VETREAKEEPREEVK) has biased composition (basic and acidic residues). 2 disordered regions span residues 260-297 (VETR…EQQE) and 398-422 (SPPS…TTTT).

The protein belongs to the AP2/ERF transcription factor family. AP2 subfamily. In terms of assembly, interacts with KIN10 and KIN11. Post-translationally, ubiquitinated. The phosphorylation at Thr-70 and Ser-166 by KIN10 facilitates its degradation via the proteasomal pathway. As to expression, mostly expressed in siliques, especially in seeds. Also detected in roots and flowers, and, to a lower extent, in leaves stems and seedlings.

The protein resides in the nucleus. Down-regulated by KIN10 that controls its protein stability under a phosphorylation-dependent manner. May be involved in the regulation of gene expression by stress factors and by components of stress signal transduction pathways. Transcriptional activator involved in the activation of a subset of sugar-responsive genes and the control of carbon flow from sucrose import to oil accumulation in developing seeds. Binds to the GCC-box pathogenesis-related promoter element. Promotes sugar uptake and seed oil accumulation by glycolysis. Required for embryo development, seed germination and, indirectly, for seedling establishment. Negative regulator of the ABA-mediated germination inhibition. The protein is Ethylene-responsive transcription factor WRI1 (WRI1) of Arabidopsis thaliana (Mouse-ear cress).